The following is a 505-amino-acid chain: Cytochrome P450 9b2 (505 aa).

Cys-449 lines the heme pocket.

It belongs to the cytochrome P450 family. Heme serves as cofactor.

Its subcellular location is the endoplasmic reticulum membrane. It localises to the microsome membrane. Functionally, may be involved in the metabolism of insect hormones and in the breakdown of synthetic insecticides. In Drosophila melanogaster (Fruit fly), this protein is Cytochrome P450 9b2 (Cyp9b2).